A 433-amino-acid polypeptide reads, in one-letter code: Adenylosuccinate synthetase (433 aa).

GTP-binding positions include 13–19 (GDEGKGK) and 41–43 (GHT). Aspartate 14 serves as the catalytic Proton acceptor. Mg(2+) contacts are provided by aspartate 14 and glycine 41. Residues 14–17 (DEGK), 39–42 (NAGH), threonine 130, arginine 144, glutamine 225, threonine 240, and arginine 304 contribute to the IMP site. The Proton donor role is filled by histidine 42. 300–306 (STTGRKR) is a substrate binding site. GTP is bound by residues arginine 306, 332–334 (KLD), and 414–416 (STG).

This sequence belongs to the adenylosuccinate synthetase family. Homodimer. Mg(2+) serves as cofactor.

It is found in the cytoplasm. The catalysed reaction is IMP + L-aspartate + GTP = N(6)-(1,2-dicarboxyethyl)-AMP + GDP + phosphate + 2 H(+). It participates in purine metabolism; AMP biosynthesis via de novo pathway; AMP from IMP: step 1/2. In terms of biological role, plays an important role in the de novo pathway of purine nucleotide biosynthesis. Catalyzes the first committed step in the biosynthesis of AMP from IMP. In Buchnera aphidicola subsp. Acyrthosiphon pisum (strain Tuc7), this protein is Adenylosuccinate synthetase.